Consider the following 372-residue polypeptide: N-methyl-L-tryptophan oxidase (372 aa).

4-34 (DLIIIGSGSVGAAAGYYATRAGLNVLMTDAH) contributes to the FAD binding site. Position 308 is an S-8alpha-FAD cysteine (C308).

This sequence belongs to the MSOX/MTOX family. MTOX subfamily. As to quaternary structure, monomer. FAD is required as a cofactor.

It carries out the reaction N(alpha)-methyl-L-tryptophan + O2 + H2O = L-tryptophan + formaldehyde + H2O2. In terms of biological role, catalyzes the oxidative demethylation of N-methyl-L-tryptophan. The sequence is that of N-methyl-L-tryptophan oxidase from Escherichia coli O127:H6 (strain E2348/69 / EPEC).